A 397-amino-acid chain; its full sequence is 3-hydroxy-3-methylglutaryl-coenzyme A reductase (397 aa).

Active-site charge relay system residues include Glu96 and Asp301. His391 serves as the catalytic Proton donor.

It belongs to the HMG-CoA reductase family.

It carries out the reaction (R)-mevalonate + 2 NADP(+) + CoA = (3S)-3-hydroxy-3-methylglutaryl-CoA + 2 NADPH + 2 H(+). It participates in metabolic intermediate biosynthesis; (R)-mevalonate biosynthesis; (R)-mevalonate from acetyl-CoA: step 3/3. In terms of biological role, converts HMG-CoA to mevalonate. The protein is 3-hydroxy-3-methylglutaryl-coenzyme A reductase (hmgA) of Methanothermobacter thermautotrophicus (strain ATCC 29096 / DSM 1053 / JCM 10044 / NBRC 100330 / Delta H) (Methanobacterium thermoautotrophicum).